Reading from the N-terminus, the 415-residue chain is Adenylosuccinate synthetase (415 aa).

GTP contacts are provided by residues 11-17 and 39-41; these read GDEGKGK and GHT. Asp-12 (proton acceptor) is an active-site residue. Mg(2+) is bound by residues Asp-12 and Gly-39. IMP-binding positions include 12 to 15, 37 to 40, Thr-124, Arg-138, Gln-218, Thr-233, and Arg-297; these read DEGK and NAGH. Residue His-40 is the Proton donor of the active site. Substrate is bound at residue 293–299; sequence TTTGRAR. GTP-binding positions include Arg-299, 325 to 327, and 403 to 405; these read KLD and STS.

The protein belongs to the adenylosuccinate synthetase family. As to quaternary structure, homodimer. Mg(2+) is required as a cofactor.

It localises to the cytoplasm. The catalysed reaction is IMP + L-aspartate + GTP = N(6)-(1,2-dicarboxyethyl)-AMP + GDP + phosphate + 2 H(+). It functions in the pathway purine metabolism; AMP biosynthesis via de novo pathway; AMP from IMP: step 1/2. Plays an important role in the de novo pathway of purine nucleotide biosynthesis. Catalyzes the first committed step in the biosynthesis of AMP from IMP. The protein is Adenylosuccinate synthetase of Helicobacter hepaticus (strain ATCC 51449 / 3B1).